Here is a 447-residue protein sequence, read N- to C-terminus: Argininosuccinate synthase (447 aa).

ATP contacts are provided by residues 12-20 and alanine 39; that span reads AYSGGLDTS. Tyrosine 92 and serine 97 together coordinate L-citrulline. Position 122 (glycine 122) interacts with ATP. Residues threonine 124, asparagine 128, and aspartate 129 each coordinate L-aspartate. Position 128 (asparagine 128) interacts with L-citrulline. L-citrulline contacts are provided by arginine 132, serine 182, serine 191, glutamate 267, and tyrosine 279.

This sequence belongs to the argininosuccinate synthase family. Type 1 subfamily. As to quaternary structure, homotetramer.

It localises to the cytoplasm. The catalysed reaction is L-citrulline + L-aspartate + ATP = 2-(N(omega)-L-arginino)succinate + AMP + diphosphate + H(+). It participates in amino-acid biosynthesis; L-arginine biosynthesis; L-arginine from L-ornithine and carbamoyl phosphate: step 2/3. The sequence is that of Argininosuccinate synthase from Sulfurovum sp. (strain NBC37-1).